Consider the following 149-residue polypeptide: MRCPFCAAEETKVVDSRLAADGYQIRRRRECTSCKERFTTFESAELVVPYVIKNNGNRVPSDANKLRVSLSRALEKRPVSADDLEKAISKIIIQLQSTGEREVPSKLVGSLAMDALKQLDKVAYIRFASVYLSFDDIEEFTKEIEKLRE.

A zinc finger spans residues 3-34 (CPFCAAEETKVVDSRLAADGYQIRRRRECTSC). Residues 49-139 (PYVIKNNGNR…VYLSFDDIEE (91 aa)) form the ATP-cone domain.

It belongs to the NrdR family. Zn(2+) is required as a cofactor.

In terms of biological role, negatively regulates transcription of bacterial ribonucleotide reductase nrd genes and operons by binding to NrdR-boxes. This Actinobacillus pleuropneumoniae serotype 3 (strain JL03) protein is Transcriptional repressor NrdR.